A 239-amino-acid chain; its full sequence is EF-hand domain-containing protein D1 (239 aa).

Basic and acidic residues predominate over residues 1 to 18; that stretch reads MASEELACKLERRLRREE. The interval 1–53 is disordered; sequence MASEELACKLERRLRREEAEESGPQLAPLGAPAPEPKPEPEPPARAPTASADA. 2 EF-hand domains span residues 90–125 and 126–161; these read RLIK…LGAP and QTHL…AAAG. Ca(2+) contacts are provided by aspartate 103, aspartate 107, glutamate 114, aspartate 139, aspartate 141, aspartate 143, lysine 145, and glutamate 150. A Phosphoserine modification is found at serine 201.

The protein localises to the mitochondrion inner membrane. Its function is as follows. Acts as a calcium sensor for mitochondrial flash (mitoflash) activation, an event characterized by stochastic bursts of superoxide production. May play a role in neuronal differentiation. The protein is EF-hand domain-containing protein D1 (EFHD1) of Homo sapiens (Human).